The sequence spans 820 residues: Serine/threonine-protein phosphatase 4 regulatory subunit 3B (820 aa).

The WH1 domain occupies 1–100; the sequence is MSDTRRRVKV…DEIWEKICQV (100 aa). Phosphoserine occurs at positions 117 and 663. The segment at 687–820 is disordered; sequence EDDDEEGKAV…SPRKRPRLGS (134 aa). A compositionally biased stretch (basic and acidic residues) spans 701–732; the sequence is EKSKTEDDFPDSYEKFMETKKAKESEDKENLP. A compositionally biased stretch (polar residues) spans 744 to 789; it reads FSHSPSATNGTNSTNSKSVVSQTTPASSNVASSKTTSLATSVTATK. Over residues 798 to 809 the composition is skewed to acidic residues; that stretch reads YPDDEEEDEEEE. S811 bears the Phosphoserine mark.

The protein belongs to the SMEK family. Serine/threonine-protein phosphatase 4 (PP4) occurs in different assemblies of the catalytic and one or more regulatory subunits. Component of the PP4 complex PPP4C-PPP4R2-PPP4R3B.

The protein localises to the cytoplasm. The protein resides in the cytoskeleton. It localises to the microtubule organizing center. It is found in the centrosome. Its subcellular location is the nucleus. Functionally, regulatory subunit of serine/threonine-protein phosphatase 4 (PP4). May regulate the activity of PPP4C at centrosomal microtubule organizing centers. The protein is Serine/threonine-protein phosphatase 4 regulatory subunit 3B of Mus musculus (Mouse).